Consider the following 157-residue polypeptide: Transcription elongation factor GreA (157 aa).

Positions L9–I30 form a coiled coil.

The protein belongs to the GreA/GreB family.

In terms of biological role, necessary for efficient RNA polymerase transcription elongation past template-encoded arresting sites. The arresting sites in DNA have the property of trapping a certain fraction of elongating RNA polymerases that pass through, resulting in locked ternary complexes. Cleavage of the nascent transcript by cleavage factors such as GreA or GreB allows the resumption of elongation from the new 3'terminus. GreA releases sequences of 2 to 3 nucleotides. The polypeptide is Transcription elongation factor GreA (Magnetococcus marinus (strain ATCC BAA-1437 / JCM 17883 / MC-1)).